A 355-amino-acid polypeptide reads, in one-letter code: Elongation factor Ts (355 aa).

The involved in Mg(2+) ion dislocation from EF-Tu stretch occupies residues Thr82 to Val85.

It belongs to the EF-Ts family.

It localises to the cytoplasm. In terms of biological role, associates with the EF-Tu.GDP complex and induces the exchange of GDP to GTP. It remains bound to the aminoacyl-tRNA.EF-Tu.GTP complex up to the GTP hydrolysis stage on the ribosome. This is Elongation factor Ts (tsf) from Helicobacter pylori (strain ATCC 700392 / 26695) (Campylobacter pylori).